Reading from the N-terminus, the 477-residue chain is Aspartyl/glutamyl-tRNA(Asn/Gln) amidotransferase subunit B (477 aa).

Belongs to the GatB/GatE family. GatB subfamily. As to quaternary structure, heterotrimer of A, B and C subunits.

The catalysed reaction is L-glutamyl-tRNA(Gln) + L-glutamine + ATP + H2O = L-glutaminyl-tRNA(Gln) + L-glutamate + ADP + phosphate + H(+). It catalyses the reaction L-aspartyl-tRNA(Asn) + L-glutamine + ATP + H2O = L-asparaginyl-tRNA(Asn) + L-glutamate + ADP + phosphate + 2 H(+). In terms of biological role, allows the formation of correctly charged Asn-tRNA(Asn) or Gln-tRNA(Gln) through the transamidation of misacylated Asp-tRNA(Asn) or Glu-tRNA(Gln) in organisms which lack either or both of asparaginyl-tRNA or glutaminyl-tRNA synthetases. The reaction takes place in the presence of glutamine and ATP through an activated phospho-Asp-tRNA(Asn) or phospho-Glu-tRNA(Gln). This Methylobacillus flagellatus (strain ATCC 51484 / DSM 6875 / VKM B-1610 / KT) protein is Aspartyl/glutamyl-tRNA(Asn/Gln) amidotransferase subunit B.